A 212-amino-acid polypeptide reads, in one-letter code: Abscisic acid receptor PYL10 (212 aa).

Residues 34–191 are START-like; the sequence is YAVGPGQCSS…NLQKLKSVSE (158 aa). Abscisate is bound by residues Lys-70, 107–112, 134–140, and Glu-156; these read ASTSTE and RLRNYRS. A Gate loop motif is present at residues 103-107; sequence SGLPA. The Latch loop motif lies at 133–135; that stretch reads HRL.

This sequence belongs to the PYR/PYL/RCAR abscisic acid intracellular receptor family. In terms of assembly, homodimer. Interacts with PP2C53. Binding to PP2C53 is dependent on the presence of abscisic acid (ABA). Interacts with PP2C50. Binding to PP2C50 is dependent on the presence of ABA.

It is found in the cytoplasm. It localises to the cytosol. The protein localises to the nucleus. In terms of biological role, inhibits the protein phosphatases PP2C06 and PP2C09 when activated by abscisic acid (ABA). Together with PP2C53, SAPK8 and SAPK10, may form an ABA signaling module involved in stress response. The chain is Abscisic acid receptor PYL10 from Oryza sativa subsp. japonica (Rice).